Consider the following 101-residue polypeptide: Ubiquitin-related modifier 1 homolog (101 aa).

Gly101 is modified (1-thioglycine). Gly101 is covalently cross-linked (Glycyl lysine isopeptide (Gly-Lys) (interchain with K-? in acceptor proteins)).

Belongs to the URM1 family. In terms of assembly, interacts with cer. C-terminal thiocarboxylation occurs in 2 steps, it is first acyl-adenylated (-COAMP) via the hesA/moeB/thiF part of the MOCS3 homolog, then thiocarboxylated (-COSH) via the rhodanese domain of the MOCS3 homolog.

The protein localises to the cytoplasm. It functions in the pathway tRNA modification; 5-methoxycarbonylmethyl-2-thiouridine-tRNA biosynthesis. Functionally, acts as a sulfur carrier required for 2-thiolation of mcm(5)S(2)U at tRNA wobble positions of cytosolic tRNA(Lys), tRNA(Glu) and tRNA(Gln). Serves as sulfur donor in tRNA 2-thiolation reaction by being thiocarboxylated (-COSH) at its C-terminus by MOCS3. The sulfur is then transferred to tRNA to form 2-thiolation of mcm(5)S(2)U. Also acts as a ubiquitin-like protein (UBL) that is covalently conjugated via an isopeptide bond to lysine residues of target proteins such as Prx2/Jafrac1, Ciao1, Eip71CD and GILT1. The thiocarboxylated form serves as substrate for conjugation and oxidative stress specifically induces the formation of UBL-protein conjugates. This chain is Ubiquitin-related modifier 1 homolog, found in Drosophila erecta (Fruit fly).